Here is a 58-residue protein sequence, read N- to C-terminus: Succinate dehydrogenase subunit 8A, mitochondrial (58 aa).

In terms of assembly, component of complex II composed of eight subunits in plants: four classical SDH subunits SDH1, SDH2, SDH3 and SDH4 (a flavoprotein (FP), an iron-sulfur protein (IP), and a cytochrome b composed of a large and a small subunit.), as well as four subunits unknown in mitochondria from bacteria and heterotrophic eukaryotes.

The protein resides in the mitochondrion inner membrane. It participates in carbohydrate metabolism; tricarboxylic acid cycle. This Oryza sativa subsp. japonica (Rice) protein is Succinate dehydrogenase subunit 8A, mitochondrial.